The sequence spans 101 residues: Small ribosomal subunit protein uS14A (101 aa).

Residues 31-69 (IAAPGSSPEERAAAQQELRRQPRDASATRLRNRDAVDGR) form a disordered region. A compositionally biased stretch (basic and acidic residues) spans 38-53 (PEERAAAQQELRRQPR).

This sequence belongs to the universal ribosomal protein uS14 family. Part of the 30S ribosomal subunit. Contacts proteins S3 and S10.

Functionally, binds 16S rRNA, required for the assembly of 30S particles and may also be responsible for determining the conformation of the 16S rRNA at the A site. This Saccharopolyspora erythraea (strain ATCC 11635 / DSM 40517 / JCM 4748 / NBRC 13426 / NCIMB 8594 / NRRL 2338) protein is Small ribosomal subunit protein uS14A.